A 256-amino-acid chain; its full sequence is MDVDPVNSEMELDNKPTCETVPGLPQKKHYRQRAHSNPHSDHDIEYPLTPDHMDWSKQYGDYAAGRQVEFADIGCGYGGLLMRLSPMFPETLMIGMEIRVKVSDYVNEKIQALRKHHEGAGHYRNIAVLRSNAMKYMPNYFRKGQLSKMFFLFPDPHFKNKKHKWRIITPTLVSEYAYVLREQGLIYTITDVKDLHDWMVKHLNEHPLFERLSDDEMKADPVVAMLYESTEEGQKVTRNDGEKWPAVFRRLPNPPL.

Positions 1-43 are disordered; sequence MDVDPVNSEMELDNKPTCETVPGLPQKKHYRQRAHSNPHSDHD. The span at 26–36 shows a compositional bias: basic residues; the sequence is QKKHYRQRAHS. S-adenosyl-L-methionine is bound by residues Gly74, 97–98, 132–133, and Leu152; these read EI and NA. The active site involves Asp155. S-adenosyl-L-methionine is bound at residue 230-232; it reads TEE.

This sequence belongs to the class I-like SAM-binding methyltransferase superfamily. TrmB family.

It is found in the nucleus. It catalyses the reaction guanosine(46) in tRNA + S-adenosyl-L-methionine = N(7)-methylguanosine(46) in tRNA + S-adenosyl-L-homocysteine. The protein operates within tRNA modification; N(7)-methylguanine-tRNA biosynthesis. Its function is as follows. Catalyzes the formation of N(7)-methylguanine at position 46 (m7G46) in tRNA. The chain is tRNA (guanine-N(7)-)-methyltransferase from Caenorhabditis briggsae.